The sequence spans 352 residues: Isopentenyl-diphosphate delta-isomerase (352 aa).

A substrate-binding site is contributed by R6–K7. FMN contacts are provided by residues A63–T65, S93, and N122. Substrate is bound at residue S93 to R95. Residue Q160 coordinates substrate. Residue E161 coordinates Mg(2+). Residues K192, T221, G271–R273, and S292–Q293 contribute to the FMN site.

Belongs to the IPP isomerase type 2 family. In terms of assembly, homooctamer. Dimer of tetramers. The cofactor is FMN. NADPH is required as a cofactor. Requires Mg(2+) as cofactor.

It is found in the cytoplasm. It catalyses the reaction isopentenyl diphosphate = dimethylallyl diphosphate. Involved in the biosynthesis of isoprenoids. Catalyzes the 1,3-allylic rearrangement of the homoallylic substrate isopentenyl (IPP) to its allylic isomer, dimethylallyl diphosphate (DMAPP). The polypeptide is Isopentenyl-diphosphate delta-isomerase (Pyrobaculum aerophilum (strain ATCC 51768 / DSM 7523 / JCM 9630 / CIP 104966 / NBRC 100827 / IM2)).